Here is a 130-residue protein sequence, read N- to C-terminus: Small ribosomal subunit protein uS8 (130 aa).

It belongs to the universal ribosomal protein uS8 family. As to quaternary structure, part of the 30S ribosomal subunit.

In terms of biological role, one of the primary rRNA binding proteins, it binds directly to 16S rRNA central domain where it helps coordinate assembly of the platform of the 30S subunit. The polypeptide is Small ribosomal subunit protein uS8 (Methanosphaera stadtmanae (strain ATCC 43021 / DSM 3091 / JCM 11832 / MCB-3)).